Consider the following 127-residue polypeptide: Apolipoprotein C-IV (127 aa).

An N-terminal signal peptide occupies residues 1–27; that stretch reads MSLLRNRLQALPALCLCVLVLACIGAC. An N-linked (GlcNAc...) asparagine glycan is attached at Asn63.

It belongs to the apolipoprotein C4 family. In terms of tissue distribution, expressed by the liver and secreted in plasma.

The protein localises to the secreted. May participate in lipoprotein metabolism. The protein is Apolipoprotein C-IV (APOC4) of Homo sapiens (Human).